Consider the following 1097-residue polypeptide: DNA-directed RNA polymerase subunit beta (1097 aa).

The segment at 1073 to 1097 (DVNPRRSTPSRPTYESLGVADYDED) is disordered.

It belongs to the RNA polymerase beta chain family. In cyanobacteria the RNAP catalytic core is composed of 2 alpha, 1 beta, 1 beta', 1 gamma and 1 omega subunit. When a sigma factor is associated with the core the holoenzyme is formed, which can initiate transcription.

The catalysed reaction is RNA(n) + a ribonucleoside 5'-triphosphate = RNA(n+1) + diphosphate. In terms of biological role, DNA-dependent RNA polymerase catalyzes the transcription of DNA into RNA using the four ribonucleoside triphosphates as substrates. The polypeptide is DNA-directed RNA polymerase subunit beta (Synechococcus sp. (strain RCC307)).